Consider the following 518-residue polypeptide: T-box transcription factor TBX5 (518 aa).

The tract at residues 1–46 is disordered; it reads MADTDEGFGLARTPLEPDSKDRSCDSKPESALGAPSKSPSSPQAAF. Over residues 15 to 28 the composition is skewed to basic and acidic residues; that stretch reads LEPDSKDRSCDSKP. Residues 34–45 show a composition bias toward low complexity; sequence APSKSPSSPQAA. The segment at residues 58-238 is a DNA-binding region (T-box); that stretch reads LHERELWLKF…NNPFAKGFRG (181 aa). 2 disordered regions span residues 254–307 and 330–352; these read EYPV…LLPP and ECSSTEHPYKKPYMETSPSEEDT. Polar residues predominate over residues 269-301; that stretch reads SNHSPFSSETRALSTSSNLGSQYQCENGVSGPS. Lysine 339 carries the post-translational modification N6-acetyllysine.

As to quaternary structure, monomer. Homodimer (via the T-box); binds DNA as homodimer. Interacts (via the T-box) with NKX2-5 (via the homeobox); this complex binds DNA. Interacts with GATA4. Interacts with KAT2A and KAT2B. Acetylation at Lys-339 by KAT2A and KAT2B promotes nuclear retention.

Its subcellular location is the nucleus. The protein resides in the cytoplasm. DNA-binding protein that regulates the transcription of several genes and is involved in heart development and limb pattern formation. Binds to the core DNA motif of NPPA promoter. The sequence is that of T-box transcription factor TBX5 (Tbx5) from Mus musculus (Mouse).